The following is a 321-amino-acid chain: Cytochrome c biogenesis protein CcsA (321 aa).

8 helical membrane passes run 12 to 32, 45 to 62, 71 to 91, 98 to 117, 143 to 163, 227 to 247, 260 to 277, and 292 to 312; these read HISFSIISIVIIIHLMNLLVY, MIATFSSITGFLVTRWIS, LYESLIFLSWSLSIIHIILYI, LNAITAPSAIFTQGFATSGL, MLLSYAALLCGSLLSVALIVI, VISLGFTFLTIGILSGAVWAN, ETWAFITWTIFAIYLHTR, and VASIGFLLIWICYFGINLLGI.

It belongs to the CcmF/CycK/Ccl1/NrfE/CcsA family. May interact with Ccs1.

It localises to the plastid. The protein localises to the chloroplast thylakoid membrane. In terms of biological role, required during biogenesis of c-type cytochromes (cytochrome c6 and cytochrome f) at the step of heme attachment. The sequence is that of Cytochrome c biogenesis protein CcsA from Phalaenopsis aphrodite subsp. formosana (Moth orchid).